The primary structure comprises 293 residues: Sphingolipid C4-hydroxylase sur2 (293 aa).

The next 3 helical transmembrane spans lie at 18-38 (LVSP…LHYI), 68-88 (AVLF…MFEG), and 127-147 (FIVP…WQYF). In terms of domain architecture, Fatty acid hydroxylase spans 136–270 (FAFFIIDSWQ…FTFWDHVLGT (135 aa)).

This sequence belongs to the sterol desaturase family.

It localises to the endoplasmic reticulum membrane. Its pathway is membrane lipid metabolism; sphingolipid biosynthesis. In terms of biological role, required for hydroxylation of C-4 in the sphingoid moiety of ceramide. Involved in the response to syringomycin. The polypeptide is Sphingolipid C4-hydroxylase sur2 (sur2) (Schizosaccharomyces pombe (strain 972 / ATCC 24843) (Fission yeast)).